Consider the following 742-residue polypeptide: Photosystem I P700 chlorophyll a apoprotein A2 (742 aa).

8 helical membrane passes run 46-69 (LFSTHFGHLAIIGLWVAGNLFHIA), 135-158 (LFQGAIFINILVCWLLFAGWLHLQ), 175-199 (LNHHLAVLFGFSSIAWTGHLIHVAI), 273-291 (IAHHHLAIGVVFIIAGHMY), 336-359 (LHFQLGLALASLGVACSLVAQHMG), 375-401 (SALYTHHQYIAMFLMVGAFSHGAIFFV), 423-445 (ALISHLSWVTMLLGFHTLGIYVH), and 525-543 (FLVHHAIALGLHTTALILI). 2 residues coordinate [4Fe-4S] cluster: cysteine 567 and cysteine 576. Helical transmembrane passes span 583–604 (ATYLAMFWALNTIAWITFYWHW) and 651–673 (LSPWAWMFLFGHLIWATGFMFLI). Divinyl chlorophyll a contacts are provided by histidine 662, methionine 670, and tyrosine 678. Tryptophan 679 serves as a coordination point for phylloquinone. The helical transmembrane segment at 715–735 (LVGLTHFTVGNFVTFGAFVIA) threads the bilayer.

The protein belongs to the PsaA/PsaB family. The PsaA/B heterodimer binds the P700 divinyl chlorophyll special pair and subsequent electron acceptors. PSI consists of a core antenna complex that captures photons, and an electron transfer chain that converts photonic excitation into a charge separation. The cyanobacterial PSI reaction center is composed of one copy each of PsaA,B,C,D,E,F,I,J,K,L,M and X, and forms trimeric complexes. The cofactor is PSI electron transfer chain: 5 divinyl chlorophyll a, 1 divinyl chlorophyll a', 2 phylloquinones and 3 4Fe-4S clusters. PSI core antenna: 90 divinyl chlorophyll a, 22 carotenoids, 3 phospholipids and 1 galactolipid. P700 is a divinyl chlorophyll a/divinyl chlorophyll a' dimer, A0 is one or more divinyl chlorophyll a, A1 is one or both phylloquinones and FX is a shared 4Fe-4S iron-sulfur center..

It is found in the cellular thylakoid membrane. The catalysed reaction is reduced [plastocyanin] + hnu + oxidized [2Fe-2S]-[ferredoxin] = oxidized [plastocyanin] + reduced [2Fe-2S]-[ferredoxin]. PsaA and PsaB bind P700, the primary electron donor of photosystem I (PSI), as well as the electron acceptors A0, A1 and FX. PSI is a plastocyanin/cytochrome c6-ferredoxin oxidoreductase, converting photonic excitation into a charge separation, which transfers an electron from the donor P700 chlorophyll pair to the spectroscopically characterized acceptors A0, A1, FX, FA and FB in turn. Oxidized P700 is reduced on the lumenal side of the thylakoid membrane by plastocyanin or cytochrome c6. The polypeptide is Photosystem I P700 chlorophyll a apoprotein A2 (Prochlorococcus marinus (strain NATL2A)).